A 377-amino-acid chain; its full sequence is Chaperone MoxR1 (377 aa).

The interval 1-33 is disordered; it reads MTSAGGFPAGAGGYQTPGGHSASPAHEAPPGGA. Residues 7-16 are compositionally biased toward gly residues; sequence FPAGAGGYQT. The span at 19–33 shows a compositional bias: low complexity; the sequence is GHSASPAHEAPPGGA. 78–85 is a binding site for ATP; that stretch reads GVPGVAKT.

This sequence belongs to the MoxR family. Interacts with RipA. Interacts with host Toll-like receptor 4 (TLR4).

Displays ATP-enhanced chaperone activity. Required for the proper folding of the peptidoglycan endopeptidase RipA and its secretion through the TAT secretion system. In vitro, prevents thermal aggregation of MalZ protein and protects the functional activity of the restriction enzyme NdeI from thermal inactivation. Its function is as follows. Could be a moonlighting protein that uses a multipronged approach to dampen host-directed immunity for efficient replication, survival and pathogenesis. Can enhance virulence by inhibiting autophagy and apoptosis, and disrupting cellular bioenergetics. Binds and activates host TLR4 on the surface of macrophage cells, leading to the activation of the host NFKB and MAPK signaling cascades and enhanced secretion of proinflammatory cytokines. Inhibits autophagic flux via activation of PI3K-AKT-MTOR-ULK1 signaling cascade and represses apoptosis via inhibiting protooncogene c-FOS and MAPK JNK1/2. Also induces robust disruption of cellular bioenergetics by metabolic reprogramming to rewire the citric acid cycle intermediates for its benefit. This chain is Chaperone MoxR1, found in Mycobacterium tuberculosis (strain ATCC 25618 / H37Rv).